Here is a 261-residue protein sequence, read N- to C-terminus: Acidic leucine-rich nuclear phosphoprotein 32 family member B (261 aa).

4 LRR repeats span residues 16 to 40 (PAAV…LTAE), 43 to 64 (NLEF…PKLP), 65 to 87 (KLKK…AEKL), and 89 to 110 (NLTH…EPLK). At K86 the chain carries N6-acetyllysine. Residues 123–161 (CEVTNLNDYRESVFKLLPQLTYLDGYDREDREAPDSDAE) enclose the LRRCT domain. Positions 149 to 261 (DREDREAPDS…RETDDEGEDD (113 aa)) are disordered. Over residues 157 to 243 (DSDAEVDGVD…DEDEDEEEEE (87 aa)) the composition is skewed to acidic residues. S158 carries the post-translational modification Phosphoserine. A compositionally biased stretch (basic and acidic residues) spans 244-254 (SGKGEKRKRET). Residues 249 to 252 (KRKR) carry the Nuclear localization signal motif. At T254 the chain carries Phosphothreonine.

It belongs to the ANP32 family. Interacts with histones H3 and H4. Interacts with KLF5; this interaction induces promoter region-specific histone incorporation and inhibition of histone acetylation by ANP32B. Post-translationally, some Glu residues are glycylated by TTLL8; a modification that generates a side chains of glycine on the gamma-carboxyl groups of specific glutamate residues. Directly cleaved by caspase-3/CASP3.

It is found in the nucleus. Functionally, multifunctional protein that is involved in the regulation of many processes including cell proliferation, apoptosis, cell cycle progression or transcription. Regulates the proliferation of neuronal stem cells, differentiation of leukemic cells and progression from G1 to S phase of the cell cycle. As negative regulator of caspase-3-dependent apoptosis, may act as an antagonist of ANP32A in regulating tissue homeostasis. Exhibits histone chaperone properties, able to recruit histones to certain promoters, thus regulating the transcription of specific genes. Also plays an essential role in the nucleocytoplasmic transport of specific mRNAs via the uncommon nuclear mRNA export receptor XPO1/CRM1. Participates in the regulation of adequate adaptive immune responses by acting on mRNA expression and cell proliferation. The chain is Acidic leucine-rich nuclear phosphoprotein 32 family member B (ANP32B) from Bos taurus (Bovine).